The chain runs to 464 residues: Fumarate hydratase class II (464 aa).

Residues 98 to 100, 129 to 132, 139 to 141, and T187 contribute to the substrate site; these read SGT, HPND, and SSN. Residue H188 is the Proton donor/acceptor of the active site. S318 is an active-site residue. Residues S319 and 324-326 each bind substrate; that span reads KVN.

The protein belongs to the class-II fumarase/aspartase family. Fumarase subfamily. Homotetramer.

The protein localises to the cytoplasm. The catalysed reaction is (S)-malate = fumarate + H2O. The protein operates within carbohydrate metabolism; tricarboxylic acid cycle; (S)-malate from fumarate: step 1/1. Functionally, involved in the TCA cycle. Catalyzes the stereospecific interconversion of fumarate to L-malate. The protein is Fumarate hydratase class II of Haemophilus influenzae (strain ATCC 51907 / DSM 11121 / KW20 / Rd).